A 234-amino-acid chain; its full sequence is 7-cyano-7-deazaguanine synthase (234 aa).

8 to 18 (FSGGQDSTTCA) lines the ATP pocket. Zn(2+)-binding residues include C194, C202, C205, and C208.

It belongs to the QueC family. Zn(2+) is required as a cofactor.

It carries out the reaction 7-carboxy-7-deazaguanine + NH4(+) + ATP = 7-cyano-7-deazaguanine + ADP + phosphate + H2O + H(+). It functions in the pathway purine metabolism; 7-cyano-7-deazaguanine biosynthesis. In terms of biological role, catalyzes the ATP-dependent conversion of 7-carboxy-7-deazaguanine (CDG) to 7-cyano-7-deazaguanine (preQ(0)). This Gloeobacter violaceus (strain ATCC 29082 / PCC 7421) protein is 7-cyano-7-deazaguanine synthase.